The following is a 198-amino-acid chain: Recombination protein RecR (198 aa).

The C4-type zinc finger occupies 57 to 72 (CSVCGHITDTDPCYIC). The 96-residue stretch at 80–175 (SMICVVEETK…KVTRLAHGLP (96 aa)) folds into the Toprim domain.

This sequence belongs to the RecR family.

May play a role in DNA repair. It seems to be involved in an RecBC-independent recombinational process of DNA repair. It may act with RecF and RecO. The chain is Recombination protein RecR from Macrococcus caseolyticus (strain JCSC5402) (Macrococcoides caseolyticum).